The following is a 384-amino-acid chain: GDSL esterase/lipase At1g71691 (384 aa).

Residues 1 to 27 (MAFHFRRLCFFSALLAVVLQLLHGVSG) form the signal peptide. The Nucleophile role is filled by S62. Active-site residues include D348 and H351.

Belongs to the 'GDSL' lipolytic enzyme family.

Its subcellular location is the secreted. This is GDSL esterase/lipase At1g71691 from Arabidopsis thaliana (Mouse-ear cress).